Reading from the N-terminus, the 63-residue chain is Large ribosomal subunit protein uL29 (63 aa).

The protein belongs to the universal ribosomal protein uL29 family.

The chain is Large ribosomal subunit protein uL29 from Pseudomonas fluorescens (strain ATCC BAA-477 / NRRL B-23932 / Pf-5).